The chain runs to 87 residues: Neutrophil antibiotic peptide NP-3B (87 aa).

A signal peptide spans 1-19 (MRTLILLTTLLLLALHTQA). The propeptide occupies 20-58 (ESPQGSTKEAPDEEQDISVFFGGDKGTALQDAAVKAGVT). Disulfide bonds link C59-C87, C61-C76, and C66-C86.

This sequence belongs to the alpha-defensin family.

The protein resides in the secreted. Its function is as follows. Active in vitro against S.aureus, fungi, Gram-positive and Gram-negative bacteria and to a lesser extent against an enveloped virus. The protein is Neutrophil antibiotic peptide NP-3B of Rattus norvegicus (Rat).